The chain runs to 205 residues: Urease accessory protein UreE (205 aa).

Basic and acidic residues predominate over residues Glu170–His192. Residues Glu170 to Arg205 form a disordered region.

This sequence belongs to the UreE family.

It localises to the cytoplasm. Involved in urease metallocenter assembly. Binds nickel. Probably functions as a nickel donor during metallocenter assembly. The chain is Urease accessory protein UreE from Burkholderia pseudomallei (strain 668).